The primary structure comprises 250 residues: Ribonucleotide monophosphatase NagD (250 aa).

Residues aspartate 9 and aspartate 11 each contribute to the Mg(2+) site. Aspartate 11 is a catalytic residue. Substrate-binding positions include aspartate 11, threonine 42–asparagine 43, and lysine 176. Residue aspartate 201 coordinates Mg(2+). Asparagine 202 to threonine 205 contacts substrate.

This sequence belongs to the HAD-like hydrolase superfamily. NagD family. As to quaternary structure, monomer. Mg(2+) serves as cofactor. The cofactor is Mn(2+). Co(2+) is required as a cofactor. It depends on Zn(2+) as a cofactor.

It catalyses the reaction a ribonucleoside 5'-phosphate + H2O = a ribonucleoside + phosphate. Functionally, catalyzes the dephosphorylation of an unusually broad range of substrate including deoxyribo- and ribonucleoside tri-, di-, and monophosphates, as well as polyphosphate and glucose-1-P (Glu1P). This chain is Ribonucleotide monophosphatase NagD (nagD), found in Escherichia coli O157:H7.